A 222-amino-acid chain; its full sequence is uncharacterized protein (222 aa).

6 N-linked (GlcNAc...) asparagine; by host glycosylation sites follow: Asn4, Asn75, Asn84, Asn104, Asn170, and Asn175. A helical membrane pass occupies residues 200-220 (LIIIIGIVIILLLIIVMIKTV).

The protein localises to the membrane. This is an uncharacterized protein from Acanthamoeba polyphaga (Amoeba).